The primary structure comprises 388 residues: MNLHEYQAKELFARRGLPVPKGYVCRSAGEAEKATTELGGDLWVAKCQVHAGGRGKSGGVKLCNNPQDVSAFAEQWLGKNLVTYQTDLQGQPVHHILVEAATDIAQELYLGAVIDRSSSRVVFMASTEGGVEIEKVAEKTPHLIHKVTIDPLTGPQPFQGRELAFQLGLTGKKVSQFSQIFMNLAKLFLECDLALLEINPLVITKKEELICLDAKLTVDGNALYRQPELRQIHDVTQEDAREAHAAQFELNYVALEGNIGCMVNGAGLAMGTMDMVKLYGAEPANFLDVGGGATKERVTEAFKIILSDEKVKAILVNIFGGIVRCDLIADGIIAAVAEVGMQIPVVVRLEGNNAKPGAKKLSDSGLNIIAANSLTHAAKQIAAAVKEK.

Residues 9 to 244 form the ATP-grasp domain; sequence KELFARRGLP…VTQEDAREAH (236 aa). ATP contacts are provided by residues Lys-46, 53 to 55, Glu-99, Thr-102, and Glu-107; that span reads GRG. 2 residues coordinate Mg(2+): Asn-199 and Asp-213. Substrate-binding positions include Asn-264 and 321-323; that span reads GIV.

The protein belongs to the succinate/malate CoA ligase beta subunit family. As to quaternary structure, heterotetramer of two alpha and two beta subunits. Requires Mg(2+) as cofactor.

The enzyme catalyses succinate + ATP + CoA = succinyl-CoA + ADP + phosphate. It carries out the reaction GTP + succinate + CoA = succinyl-CoA + GDP + phosphate. The protein operates within carbohydrate metabolism; tricarboxylic acid cycle; succinate from succinyl-CoA (ligase route): step 1/1. Functionally, succinyl-CoA synthetase functions in the citric acid cycle (TCA), coupling the hydrolysis of succinyl-CoA to the synthesis of either ATP or GTP and thus represents the only step of substrate-level phosphorylation in the TCA. The beta subunit provides nucleotide specificity of the enzyme and binds the substrate succinate, while the binding sites for coenzyme A and phosphate are found in the alpha subunit. In Hamiltonella defensa subsp. Acyrthosiphon pisum (strain 5AT), this protein is Succinate--CoA ligase [ADP-forming] subunit beta.